A 688-amino-acid polypeptide reads, in one-letter code: Glycine--tRNA ligase beta subunit (688 aa).

The protein belongs to the class-II aminoacyl-tRNA synthetase family. In terms of assembly, tetramer of two alpha and two beta subunits.

It is found in the cytoplasm. It catalyses the reaction tRNA(Gly) + glycine + ATP = glycyl-tRNA(Gly) + AMP + diphosphate. The chain is Glycine--tRNA ligase beta subunit from Chromohalobacter salexigens (strain ATCC BAA-138 / DSM 3043 / CIP 106854 / NCIMB 13768 / 1H11).